A 2124-amino-acid chain; its full sequence is Genome polyprotein (2124 aa).

Gly-2 carries N-myristoyl glycine; by host lipidation. A host EIF4E binding region spans residues 873–880; sequence VARDLLLI. One can recognise an SF3 helicase domain in the interval 1102 to 1264; sequence VQIATYFRNF…SAATKNGKLD (163 aa). 1130–1137 provides a ligand contact to ATP; the sequence is GKPGVGKS. Residues 1415–1437 are compositionally biased toward basic and acidic residues; that stretch reads DKPKEEEEEPEEKKEKKTEESKE. Residues 1415–1446 form a disordered region; sequence DKPKEEEEEPEEKKEKKTEESKEAAGPYNGPT. O-(5'-phospho-RNA)-tyrosine is present on Tyr-1442. Positions 1459 to 1648 constitute a Peptidase C3 domain; the sequence is SPLMDMEKKI…VGTRLTARMI (190 aa). Catalysis depends on for protease 3C activity residues His-1501, Asp-1535, and Cys-1612. The 119-residue stretch at 1893 to 2011 folds into the RdRp catalytic domain; it reads PYLYDFDYSN…ASKFELDLVM (119 aa). Catalysis depends on for RdRp activity residues Asp-1899 and Asp-1997.

This sequence belongs to the picornaviruses polyprotein family. As to quaternary structure, interacts with host EIF4E. In terms of assembly, interacts with host IFIH1/MDA5; this interaction inhibits the induction of the IFN-beta signal pathway. Specific enzymatic cleavages by the viral protease in vivo yield a variety of precursors and mature proteins. The polyprotein seems to be cotranslationally cleaved at the 2A/2B junction by a ribosomal skip from one codon to the next without formation of a peptide bond. This process would release the P1-2A peptide from the translational complex. Post-translationally, during virion maturation, immature virions are rendered infectious following cleavage of VP0 into VP4 and VP2. This maturation seems to be an autocatalytic event triggered by the presence of RNA in the capsid and is followed by a conformational change of the particle. In terms of processing, myristoylation is required during RNA encapsidation and formation of the mature virus particle. Uridylylated by the polymerase and is covalently linked to the 5'-end of genomic RNA. This uridylylated form acts as a nucleotide-peptide primer for the polymerase.

It localises to the virion. The protein resides in the host cytoplasm. Its subcellular location is the host nucleus. It is found in the host nucleolus. The protein localises to the host cytoplasmic vesicle membrane. It catalyses the reaction RNA(n) + a ribonucleoside 5'-triphosphate = RNA(n+1) + diphosphate. The enzyme catalyses ATP + H2O = ADP + phosphate + H(+). It carries out the reaction Selective cleavage of Gln-|-Gly bond in the poliovirus polyprotein. In other picornavirus reactions Glu may be substituted for Gln, and Ser or Thr for Gly.. Functionally, forms an icosahedral capsid of pseudo T=3 symmetry with capsid proteins VP2 and VP3. Together they form an icosahedral capsid composed of 60 copies of each VP1, VP2, and VP3, with a diameter of approximately 300 Angstroms. VP4 lies on the inner surface of the protein shell formed by VP1, VP2 and VP3. All the three latter proteins contain a beta-sheet structure called beta-barrel jelly roll. VP1 is situated at the 12 fivefold axes, whereas VP2 and VP3 are located at the quasi-sixfold axes. Lies on the inner surface of the capsid shell. After binding to the host receptor, the capsid undergoes conformational changes. Capsid protein VP4 is released, capsid protein VP1 N-terminus is externalized, and together, they shape a pore in the host membrane through which the viral genome is translocated into the host cell cytoplasm. After genome has been released, the channel shrinks. In terms of biological role, VP0 precursor is a component of immature procapsids. Its function is as follows. Involved in host translation shutoff by inhibiting cap-dependent mRNA translation. Nuclear localization is required for this function. The resulting inhibition of cellular protein synthesis serves to ensure maximal viral gene expression and to evade host immune response. Functionally, affects membrane integrity and causes an increase in membrane permeability. Associates with and induces structural rearrangements of intracellular membranes. It displays RNA-binding, nucleotide binding and NTPase activities. Interacts with IFIH1/MDA5 to inhibit the induction of the IFN-beta signal pathway. In terms of biological role, serves as membrane anchor via its hydrophobic domain. Its function is as follows. Forms a primer, VPg-pU, which is utilized by the polymerase for the initiation of RNA chains. Functionally, cysteine protease that generates mature viral proteins from the precursor polyprotein. In addition to its proteolytic activity, it binds to viral RNA, and thus influences viral genome replication. RNA and substrate cooperatively bind to the protease. Cleaves host PABP1, this cleavage is important for viral replication. Cleaves host TANK and disrupts the TANK-TBK1-IKKepsilon-IRF3 complex, thereby inhibiting the induction of the IFN-beta signal pathway. Replicates the genomic and antigenomic RNAs by recognizing replications specific signals. Performs VPg uridylylation. In Cosavirus A (isolate Human/Pakistan/0553/-) (HCoSV-A), this protein is Genome polyprotein.